A 1241-amino-acid polypeptide reads, in one-letter code: MIMFPLFGKISLGILIFVLIEGDFPSLTAQTYLSIEEIQEPKSAVSFLLPEESTDLSLATKKKQPLDRRETERQWLIRRRRSILFPNGVKICPDESVAEAVANHVKYFKVRVCQEAVWEAFRTFWDRLPGREEYHYWMNLCEDGVTSIFEMGTNFSESVEHRSLIMKKLTYAKETVSSSELSSPVPVGDTSTLGDTTLSVPHPEVDAYEGASESSLERPEESISNEIENVIEEATKPAGEQIAEFSIHLLGKQYREELQDSSSFHHQHLEEEFISEVENAFTGLPGYKEIRVLEFRSPKENDSGVDVYYAVTFNGEAISNTTWDLISLHSNKVENHGLVELDDKPTVVYTISNFRDYIAETLQQNFLLGNSSLNPDPDSLQLINVRGVLRHQTEDLVWNTQSSSLQATPSSILDNTFQAAWPSADESITSSIPPLDFSSGPPSATGRELWSESPLGDLVSTHKLAFPSKMGLSSSPEVLEVSSLTLHSVTPAVLQTGLPVASEERTSGSHLVEDGLANVEESEDFLSIDSLPSSSFTQPVPKETIPSMEDSDVSLTSSPYLTSSIPFGLDSLTSKVKDQLKVSPFLPDASMEKELIFDGGLGSGSGQKVDLITWPWSETSSEKSAEPLSKPWLEDDDSLLPAEIEDKKLVLVDKMDSTDQISKHSKYEHDDRSTHFPEEEPLSGPAVPIFADTAAESASLTLPKHISEVPGVDDYSVTKAPLILTSVAISASTDKSDQADAILREDMEQITESSNYEWFDSEVSMVKPDMQTLWTILPESERVWTRTSSLEKLSRDILASTPQSADRLWLSVTQSTKLPPTTISTLLEDEVIMGVQDISLELDRIGTDYYQPEQVQEQNGKVGSYVEMSTSVHSTEMVSVAWPTEGGDDLSYTQTSGALVVFFSLRVTNMMFSEDLFNKNSLEYKALEQRFLELLVPYLQSNLTGFQNLEILNFRNGSIVVNSRMKFANSVPPNVNNAVYMILEDFCTTAYNTMNLAIDKYSLDVESGDEANPCKFQACNEFSECLVNPWSGEAKCRCFPGYLSVEERPCQSLCDLQPDFCLNDGKCDIMPGHGAICRCRVGENWWYRGKHCEEFVSEPVIIGITIASVVGLLVIFSAIIYFFIRTLQAHHDRSERESPFSGSSRQPDSLSSIENAVKYNPVYESHRAGCEKYEGPYPQHPFYSSASGDVIGGLSREEIRQMYESSELSREEIQERMRVLELYANDPEFAAFVREQQVEEV.

An N-terminal signal peptide occupies residues 1–22; the sequence is MIMFPLFGKISLGILIFVLIEG. Residues 23 to 1099 lie on the Extracellular side of the membrane; it reads DFPSLTAQTY…KHCEEFVSEP (1077 aa). An N-linked (GlcNAc...) asparagine glycan is attached at Asn154. The interval 180-223 is disordered; that stretch reads ELSSPVPVGDTSTLGDTTLSVPHPEVDAYEGASESSLERPEESI. Positions 189–199 are enriched in polar residues; it reads DTSTLGDTTLS. Residues Thr190 and Thr192 are each glycosylated (O-linked (GalNAc...) threonine). Residues 239–353 enclose the SEA 1 domain; it reads GEQIAEFSIH…KPTVVYTISN (115 aa). The segment at 259-267 is hyaluronan-binding motif involved in chondroitin sulfate A-binding; the sequence is QDSSSFHHQ. N-linked (GlcNAc...) asparagine glycosylation is found at Asn301, Asn320, and Asn370. 2 O-linked (GalNAc...) threonine glycosylation sites follow: Thr544 and Thr556. A compositionally biased stretch (basic and acidic residues) spans 660-678; the sequence is QISKHSKYEHDDRSTHFPE. A disordered region spans residues 660–684; the sequence is QISKHSKYEHDDRSTHFPEEEPLSG. One can recognise an SEA 2 domain in the interval 897–1010; the sequence is GALVVFFSLR…YSLDVESGDE (114 aa). 2 N-linked (GlcNAc...) asparagine glycosylation sites follow: Asn942 and Asn956. 2 consecutive EGF-like domains span residues 1010–1051 and 1052–1093; these read EANP…RPCQ and SLCD…KHCE. Disulfide bonds link Cys1014–Cys1025, Cys1019–Cys1036, Cys1038–Cys1050, Cys1054–Cys1067, Cys1061–Cys1077, and Cys1079–Cys1092. The hyaluronan-binding motif involved in chondroitin sulfate C-binding stretch occupies residues 1080–1088; that stretch reads RVGENWWYR. The chain crosses the membrane as a helical span at residues 1100-1120; that stretch reads VIIGITIASVVGLLVIFSAII. Topologically, residues 1121–1241 are cytoplasmic; sequence YFFIRTLQAH…FVREQQVEEV (121 aa). The tract at residues 1125–1133 is hyaluronan-binding motif involved in chondroitin sulfate A- and C-binding; that stretch reads RTLQAHHDR. The interval 1136–1145 is hyaluronan-binding motif involved in chondroitin sulfate C-binding; that stretch reads RESPFSGSSR. The segment at 1210 to 1218 is hyaluronan-binding motif involved in chondroitin sulfate A- and C-binding motif; that stretch reads REEIQERMR.

Post-translationally, highly glycosylated (N- and O-linked carbohydrates). Expressed in the retina (at protein level). Expressed by photoreceptors of the interphotoreceptor matrix (IPM) surrounding both rods and cones (at protein level). IPM occupies the subretinal space between the apices of the retinal pigment epithelium and the neural retina. Expressed in the pineal gland (at protein level).

The protein localises to the photoreceptor outer segment membrane. It localises to the photoreceptor inner segment membrane. It is found in the secreted. Its subcellular location is the extracellular space. The protein resides in the extracellular matrix. The protein localises to the interphotoreceptor matrix. Functionally, chondroitin sulfate- and hyaluronan-binding proteoglycan involved in the organization of interphotoreceptor matrix; may participate in the maturation and maintenance of the light-sensitive photoreceptor outer segment. Binds heparin. This is Interphotoreceptor matrix proteoglycan 2 (IMPG2) from Homo sapiens (Human).